The sequence spans 430 residues: Dye-decolorizing peroxidase Tfu_3078 (430 aa).

Residues 1-39 (MTEPDTERKGSSRRGFLAGLGAAALTGAGIGMAAGEVLR) constitute a signal peptide (tat-type signal). The disordered stretch occupies residues 42–75 (LPDSDPAASPEAEQRLRMAAQRADATAAPQPGIS). Residues 60–69 (AAQRADATAA) show a composition bias toward low complexity. The active-site Proton acceptor is Asp-242. His-338 is a binding site for heme.

This sequence belongs to the DyP-type peroxidase family. Monomer. Requires heme b as cofactor. Exported by the Tat system. The position of the signal peptide cleavage has not been experimentally proven.

It localises to the secreted. The enzyme catalyses Reactive Blue 5 + 2 H2O2 = 2,2'-disulfonyl azobenzene + 3-[(4-amino-6-chloro-1,3,5-triazin-2-yl)amino]benzenesulfonate + phthalate + 2 H2O + 2 H(+). In terms of biological role, peroxidase that is able to convert a large number of compounds, but its physiological substrate is not known. Shows high reactivity towards anthraquinone dyes (e.g. Reactive Blue 19) and a modest activity towards standard peroxidase substrates (such as guaiacol and 2,6-dimethoxyphenol) and azo dyes (e.g. Reactive Blue 5). Is also able to oxidize aromatic sulfides enantioselectively, resulting in the corresponding (R)-sulfoxides, but with a poor efficiency. Does not display catalase activity. The protein is Dye-decolorizing peroxidase Tfu_3078 of Thermobifida fusca (strain YX).